Here is a 304-residue protein sequence, read N- to C-terminus: ATP synthase gamma chain (304 aa).

It belongs to the ATPase gamma chain family. F-type ATPases have 2 components, CF(1) - the catalytic core - and CF(0) - the membrane proton channel. CF(1) has five subunits: alpha(3), beta(3), gamma(1), delta(1), epsilon(1). CF(0) has three main subunits: a, b and c.

The protein localises to the cell membrane. Functionally, produces ATP from ADP in the presence of a proton gradient across the membrane. The gamma chain is believed to be important in regulating ATPase activity and the flow of protons through the CF(0) complex. The protein is ATP synthase gamma chain of Mycolicibacterium paratuberculosis (strain ATCC BAA-968 / K-10) (Mycobacterium paratuberculosis).